The sequence spans 220 residues: Aspartic protease inhibitor 8 (220 aa).

Residues 1-23 (MMKCLFLLCLCLLPIVVFSSTFT) form the signal peptide. Residues 24 to 32 (SQNLIDLPS) constitute a propeptide that is removed on maturation. 2 disulfide bridges follow: cysteine 80-cysteine 125 and cysteine 174-cysteine 185.

The protein belongs to the protease inhibitor I3 (leguminous Kunitz-type inhibitor) family.

The protein resides in the vacuole. In terms of biological role, inhibitor of cathepsin D (aspartic protease) and trypsin (serine protease). May protect the plant by inhibiting proteases of invading organisms. The protein is Aspartic protease inhibitor 8 of Solanum tuberosum (Potato).